Reading from the N-terminus, the 257-residue chain is Transcriptional regulatory protein TrcR (257 aa).

Positions arginine 33–leucine 147 constitute a Response regulatory domain. 4-aspartylphosphate is present on aspartate 82. The ompR/PhoB-type DNA-binding region spans aspartate 158–proline 255.

In terms of processing, phosphorylated by TrcS.

Member of the two-component regulatory system TrcS/TrcR. Activates its own expression by binding specifically to the AT-rich sequence of the trcR promoter region. Also negatively regulates the expression of Rv1057 by binding to an AT-rich sequences within the Rv1057 upstream sequence. The TrcR-TrcS regulatory system may act as a transition regulatory system involved in adapting to an intracellular environment and transitioning from latency to reactivation. This is Transcriptional regulatory protein TrcR from Mycobacterium tuberculosis (strain ATCC 25618 / H37Rv).